A 284-amino-acid chain; its full sequence is MPASLIDGREISALRRTELKQRVQYHVEQGQRAPGLAVVLIGNDPASVIYVSNKRKACEEVGITSHSYDLPAETTQEKLIELINELNQSDKIDGILIQLPLPKHINERTIIEHIKPEKDVDGFHPYNLGRLAQRNPFLRPCTPLGIMNLLHHYELNVKRKHAVVIGASNIVGRPMSLELLLAGATVTICHKFTQQLQKFVEIADFLIVATGKMDVIATDWLREHQVVIDVGMHRLPDGSIRGDIDFKKAVEKVAWITPVPGGVGPMTIVTLLENTMMSAARLRE.

166 to 168 (GAS) contacts NADP(+).

This sequence belongs to the tetrahydrofolate dehydrogenase/cyclohydrolase family. Homodimer.

The enzyme catalyses (6R)-5,10-methylene-5,6,7,8-tetrahydrofolate + NADP(+) = (6R)-5,10-methenyltetrahydrofolate + NADPH. The catalysed reaction is (6R)-5,10-methenyltetrahydrofolate + H2O = (6R)-10-formyltetrahydrofolate + H(+). Its pathway is one-carbon metabolism; tetrahydrofolate interconversion. In terms of biological role, catalyzes the oxidation of 5,10-methylenetetrahydrofolate to 5,10-methenyltetrahydrofolate and then the hydrolysis of 5,10-methenyltetrahydrofolate to 10-formyltetrahydrofolate. The polypeptide is Bifunctional protein FolD (Legionella pneumophila (strain Corby)).